We begin with the raw amino-acid sequence, 288 residues long: Elongation factor Ts (288 aa).

The interval 79 to 82 (TDFV) is involved in Mg(2+) ion dislocation from EF-Tu.

The protein belongs to the EF-Ts family.

The protein resides in the cytoplasm. Its function is as follows. Associates with the EF-Tu.GDP complex and induces the exchange of GDP to GTP. It remains bound to the aminoacyl-tRNA.EF-Tu.GTP complex up to the GTP hydrolysis stage on the ribosome. The polypeptide is Elongation factor Ts (Ehrlichia ruminantium (strain Gardel)).